Here is a 220-residue protein sequence, read N- to C-terminus: MADGSGARFPRFSELCAKYAAQLAAAETRSVYAFSARPITGGEPVSLGFLRGRVLLIENVASLUGSTVREYTQMNELQRRLGARGLVVLGFPCNQFGHQENAQNAEILPSLKHVRPGNGFEPNFMLFEKCEVNGARAHPLFAFLREALPAPSDDMSTLVSDPQLIAWSPVCRNDVAWNFEKFLVGADGTPVRRYSHRCQTLAVEPDIEALLPPPARGYYA.

Residue Sec64 is part of the active site. Residue Sec64 is a non-standard amino acid, selenocysteine.

Belongs to the glutathione peroxidase family. During periods of oxidative stress, Sec-64 may react with a superoxide radical, irreversibly lose hydroselenide and be converted to dehydroalanine.

The enzyme catalyses 2 glutathione + H2O2 = glutathione disulfide + 2 H2O. Functionally, may protect the virus and component of infected cells from oxidative damage by peroxides whose formation may be stimulated by infection. The sequence is that of Glutathione peroxidase (GPX1) from Homo sapiens (Human).